The following is a 461-amino-acid chain: ATP synthase subunit beta 2 (461 aa).

151–158 (GGAGVGKT) contributes to the ATP binding site.

Belongs to the ATPase alpha/beta chains family. In terms of assembly, F-type ATPases have 2 components, CF(1) - the catalytic core - and CF(0) - the membrane proton channel. CF(1) has five subunits: alpha(3), beta(3), gamma(1), delta(1), epsilon(1). CF(0) has three main subunits: a(1), b(2) and c(9-12). The alpha and beta chains form an alternating ring which encloses part of the gamma chain. CF(1) is attached to CF(0) by a central stalk formed by the gamma and epsilon chains, while a peripheral stalk is formed by the delta and b chains.

Its subcellular location is the cell inner membrane. It carries out the reaction ATP + H2O + 4 H(+)(in) = ADP + phosphate + 5 H(+)(out). In terms of biological role, produces ATP from ADP in the presence of a proton gradient across the membrane. The catalytic sites are hosted primarily by the beta subunits. This is ATP synthase subunit beta 2 from Pseudoalteromonas atlantica (strain T6c / ATCC BAA-1087).